Here is a 362-residue protein sequence, read N- to C-terminus: Heat-inducible transcription repressor HrcA (362 aa).

The protein belongs to the HrcA family.

Negative regulator of class I heat shock genes (grpE-dnaK-dnaJ and groELS operons). Prevents heat-shock induction of these operons. This Rhodopseudomonas palustris (strain ATCC BAA-98 / CGA009) protein is Heat-inducible transcription repressor HrcA.